The following is a 398-amino-acid chain: 1-deoxy-D-xylulose 5-phosphate reductoisomerase (398 aa).

NADPH-binding residues include T11, G12, S13, I14, R38, N39, and N125. K126 contributes to the 1-deoxy-D-xylulose 5-phosphate binding site. Residue E127 participates in NADPH binding. Residue D151 coordinates Mn(2+). Residues S152, E153, S179, and H202 each coordinate 1-deoxy-D-xylulose 5-phosphate. E153 contacts Mn(2+). Residue G208 participates in NADPH binding. 1-deoxy-D-xylulose 5-phosphate contacts are provided by S215, N220, K221, and E224. A Mn(2+)-binding site is contributed by E224.

This sequence belongs to the DXR family. Requires Mg(2+) as cofactor. It depends on Mn(2+) as a cofactor.

It carries out the reaction 2-C-methyl-D-erythritol 4-phosphate + NADP(+) = 1-deoxy-D-xylulose 5-phosphate + NADPH + H(+). The protein operates within isoprenoid biosynthesis; isopentenyl diphosphate biosynthesis via DXP pathway; isopentenyl diphosphate from 1-deoxy-D-xylulose 5-phosphate: step 1/6. Functionally, catalyzes the NADPH-dependent rearrangement and reduction of 1-deoxy-D-xylulose-5-phosphate (DXP) to 2-C-methyl-D-erythritol 4-phosphate (MEP). The protein is 1-deoxy-D-xylulose 5-phosphate reductoisomerase of Burkholderia lata (strain ATCC 17760 / DSM 23089 / LMG 22485 / NCIMB 9086 / R18194 / 383).